The primary structure comprises 413 residues: Gamma-glutamyl phosphate reductase (413 aa).

The protein belongs to the gamma-glutamyl phosphate reductase family.

The protein resides in the cytoplasm. It catalyses the reaction L-glutamate 5-semialdehyde + phosphate + NADP(+) = L-glutamyl 5-phosphate + NADPH + H(+). It functions in the pathway amino-acid biosynthesis; L-proline biosynthesis; L-glutamate 5-semialdehyde from L-glutamate: step 2/2. Its function is as follows. Catalyzes the NADPH-dependent reduction of L-glutamate 5-phosphate into L-glutamate 5-semialdehyde and phosphate. The product spontaneously undergoes cyclization to form 1-pyrroline-5-carboxylate. The sequence is that of Gamma-glutamyl phosphate reductase from Lactococcus lactis subsp. cremoris (strain MG1363).